The sequence spans 707 residues: MASWLKAAEDLFEVVDRRAKSVVEDLSEEQNDLQLPASGRKGSQGKRTSSKKKKLVKEESSNKRDSSGDQSGPGVSQSEVPPSKSSVSTDETSSSGPVLLTREIHPTDADVQSVLSLPLSVADTKSDDAAVVAQESIVDGDRSESKHADGDIPNDSLVQPSPSLPDKEIEVVVSENLMDAPKNGTQRELDDSSKRDVENLDSVVHAPSVNEGNVAQSTGDEVKVGTSINLEKEQEPKVPVTSTNLKREQDRRADTTSMKIQDQLEEAQGLLKATVSTGQSKEARLARVCAGLSSRLQEIKAENAQLEELLTAEQELTKSYEASIRHLQKDLSAAKSEVTKVESSMVEALAAKNSEIETLVSAMDALKNQAALNEGKLSSLQGDMESIMRNRELAETRMMQALREELATTERRAEEERSAHNATKMAAMERERELEHRAVDASTALVRIQRIADERTAKVADFEQKVALLEAECTSLNQELQDMEVRARRGQKKAPDEANQVIQIQAWQDEVDRARQGQRDAEEKLSLMEAEMQKLRVEMAAMKRDAEHYSRQEHTELEKRYRELTDLLYYKQTQLETMASEKAAAEFQLEKEVKRLHEAQVEVEKSRVSRRASATWEEDSEIKTLEPLPLYHRHMATASTQLQNAVKLLDSGAVRATRFLWRYPIARMFLLFYLVFVHLFLMYLIHRLQEQAEAQEVAAMTNNVFRL.

The Cytoplasmic portion of the chain corresponds to 1 to 664 (MASWLKAAED…RATRFLWRYP (664 aa)). 3 disordered regions span residues 22–106 (VVED…EIHP), 121–196 (VADT…SKRD), and 234–256 (QEPK…ADTT). Residues 38–47 (SGRKGSQGKR) show a composition bias toward low complexity. Residues 56–67 (VKEESSNKRDSS) are compositionally biased toward basic and acidic residues. Polar residues predominate over residues 68–80 (GDQSGPGVSQSEV). Low complexity predominate over residues 83–95 (SKSSVSTDETSSS). Basic and acidic residues-rich tracts occupy residues 139–150 (DGDRSESKHADG), 185–196 (TQRELDDSSKRD), and 245–254 (LKREQDRRAD). Coiled coils occupy residues 287 to 424 (RVCA…NATK) and 452 to 608 (ADER…KSRV). The helical; Signal-anchor for type II membrane protein transmembrane segment at 665-685 (IARMFLLFYLVFVHLFLMYLI) threads the bilayer. Residues 686 to 707 (HRLQEQAEAQEVAAMTNNVFRL) are Lumenal-facing.

The protein resides in the golgi apparatus membrane. Functionally, golgi matrix protein playing a role in tethering of vesicles to Golgi membranes and in maintaining the overall structure of the Golgi apparatus. The sequence is that of Golgin candidate 1 (GC1) from Arabidopsis thaliana (Mouse-ear cress).